The sequence spans 120 residues: Large ribosomal subunit protein uL18 (120 aa).

The protein belongs to the universal ribosomal protein uL18 family. In terms of assembly, part of the 50S ribosomal subunit; part of the 5S rRNA/L5/L18/L25 subcomplex. Contacts the 5S and 23S rRNAs.

This is one of the proteins that bind and probably mediate the attachment of the 5S RNA into the large ribosomal subunit, where it forms part of the central protuberance. The sequence is that of Large ribosomal subunit protein uL18 from Trichodesmium erythraeum (strain IMS101).